Consider the following 158-residue polypeptide: D-aminoacyl-tRNA deacylase (158 aa).

A Gly-cisPro motif, important for rejection of L-amino acids motif is present at residues 143–144 (GP).

The protein belongs to the DTD family. In terms of assembly, homodimer.

The protein localises to the cytoplasm. It catalyses the reaction glycyl-tRNA(Ala) + H2O = tRNA(Ala) + glycine + H(+). The catalysed reaction is a D-aminoacyl-tRNA + H2O = a tRNA + a D-alpha-amino acid + H(+). An aminoacyl-tRNA editing enzyme that deacylates mischarged D-aminoacyl-tRNAs. Also deacylates mischarged glycyl-tRNA(Ala), protecting cells against glycine mischarging by AlaRS. Acts via tRNA-based rather than protein-based catalysis; rejects L-amino acids rather than detecting D-amino acids in the active site. By recycling D-aminoacyl-tRNA to D-amino acids and free tRNA molecules, this enzyme counteracts the toxicity associated with the formation of D-aminoacyl-tRNA entities in vivo and helps enforce protein L-homochirality. In Solidesulfovibrio magneticus (strain ATCC 700980 / DSM 13731 / RS-1) (Desulfovibrio magneticus), this protein is D-aminoacyl-tRNA deacylase.